The chain runs to 466 residues: Ribulose bisphosphate carboxylase large chain (466 aa).

Position 5 is an N6,N6,N6-trimethyllysine (Lys5). Substrate-binding residues include Asn114 and Thr164. The Proton acceptor role is filled by Lys166. Substrate is bound at residue Lys168. Residues Lys192, Asp194, and Glu195 each contribute to the Mg(2+) site. An N6-carboxylysine modification is found at Lys192. The Proton acceptor role is filled by His285. Substrate contacts are provided by Arg286, His318, and Ser370.

This sequence belongs to the RuBisCO large chain family. Type I subfamily. Heterohexadecamer of 8 large chains and 8 small chains; disulfide-linked. The disulfide link is formed within the large subunit homodimers. It depends on Mg(2+) as a cofactor. Post-translationally, the disulfide bond which can form in the large chain dimeric partners within the hexadecamer appears to be associated with oxidative stress and protein turnover.

The protein resides in the plastid. The protein localises to the chloroplast. It carries out the reaction 2 (2R)-3-phosphoglycerate + 2 H(+) = D-ribulose 1,5-bisphosphate + CO2 + H2O. It catalyses the reaction D-ribulose 1,5-bisphosphate + O2 = 2-phosphoglycolate + (2R)-3-phosphoglycerate + 2 H(+). RuBisCO catalyzes two reactions: the carboxylation of D-ribulose 1,5-bisphosphate, the primary event in carbon dioxide fixation, as well as the oxidative fragmentation of the pentose substrate in the photorespiration process. Both reactions occur simultaneously and in competition at the same active site. The chain is Ribulose bisphosphate carboxylase large chain from Vitis aestivalis (Grape).